The chain runs to 554 residues: Serine/threonine-protein phosphatase 2B catalytic subunit (554 aa).

Residues Asp-119, His-121, and Asp-147 each contribute to the Fe cation site. Zn(2+) is bound by residues Asp-147 and Asn-179. The Proton donor role is filled by His-180. Zn(2+) is bound by residues His-228 and His-310. Residues 411–433 are disordered; the sequence is LKESAPTQHKQPAPSENENKADQ. Residues 415-426 are compositionally biased toward polar residues; the sequence is APTQHKQPAPSE.

It belongs to the PPP phosphatase family. PP-2B subfamily. Composed of two components (A and B), the A component is the catalytic subunit and the B component confers calcium sensitivity. Fe(3+) serves as cofactor. The cofactor is Zn(2+).

It carries out the reaction O-phospho-L-seryl-[protein] + H2O = L-seryl-[protein] + phosphate. The catalysed reaction is O-phospho-L-threonyl-[protein] + H2O = L-threonyl-[protein] + phosphate. Functionally, calcium-dependent, calmodulin-stimulated protein phosphatase. This subunit may have a role in the calmodulin activation of calcineurin. Appears to be involved in cytokinesis, mating, transport, nuclear and spindle pole body positioning, and cell shape. This chain is Serine/threonine-protein phosphatase 2B catalytic subunit (ppb1), found in Schizosaccharomyces pombe (strain 972 / ATCC 24843) (Fission yeast).